We begin with the raw amino-acid sequence, 640 residues long: 1,4-alpha-glucan branching enzyme GlgB (640 aa).

The Nucleophile role is filled by Asp318. Glu371 (proton donor) is an active-site residue.

It belongs to the glycosyl hydrolase 13 family. GlgB subfamily. As to quaternary structure, monomer.

The enzyme catalyses Transfers a segment of a (1-&gt;4)-alpha-D-glucan chain to a primary hydroxy group in a similar glucan chain.. It participates in glycan biosynthesis; glycogen biosynthesis. Its function is as follows. Catalyzes the formation of the alpha-1,6-glucosidic linkages in glycogen by scission of a 1,4-alpha-linked oligosaccharide from growing alpha-1,4-glucan chains and the subsequent attachment of the oligosaccharide to the alpha-1,6 position. The chain is 1,4-alpha-glucan branching enzyme GlgB from Francisella tularensis subsp. mediasiatica (strain FSC147).